The primary structure comprises 82 residues: UPF0337 protein PP_2059 (82 aa).

Belongs to the UPF0337 (CsbD) family.

In Pseudomonas putida (strain ATCC 47054 / DSM 6125 / CFBP 8728 / NCIMB 11950 / KT2440), this protein is UPF0337 protein PP_2059.